The following is a 127-amino-acid chain: Protein translocase subunit SecE (127 aa).

3 helical membrane-spanning segments follow: residues 16 to 36, 42 to 62, and 98 to 118; these read IAKWSFLGILIILFILSNHYY, IFQNILLTSLTILSTGLIFLT, and IIVTILLALILWGLDNILIWF.

The protein belongs to the SecE/SEC61-gamma family. Component of the Sec protein translocase complex. Heterotrimer consisting of SecY, SecE and SecG subunits. The heterotrimers can form oligomers, although 1 heterotrimer is thought to be able to translocate proteins. Interacts with the ribosome. Interacts with SecDF, and other proteins may be involved. Interacts with SecA.

It is found in the cell membrane. Essential subunit of the Sec protein translocation channel SecYEG. Clamps together the 2 halves of SecY. May contact the channel plug during translocation. This Buchnera aphidicola subsp. Baizongia pistaciae (strain Bp) protein is Protein translocase subunit SecE.